The sequence spans 516 residues: MERQPASTGSRQELGRLLEAVLSNRGRANAVFDILAVLQSEDPEEIKEGVRTCSRLFGTLLEREELFVGSLPCEDMALAGSQGATYKYKVWMRHRYHSCCNRLEELLTHPSFQVKELALETLMKFVQLEGAKPLEKPQWESHYLFPRTLFRAVVGGLLTPEDDHSLLISQFCEYLEYDDIRYHAMQVATSILARATSRQPEVSLTFWNNAFTLLSAVNLPLQEHELTNFYVKHAQTSSKWKVVHLKEQRKAFQEMWLGFLKHKLPLSLYKKVLVAMHDSILPHLAQPTLMIDFLTSACDVGGAISLLALNGLFILIHKHNLEYPDFYQRLYGLLDPSIFHVKYRARFFHLADLFLSSSHLPAYLVAAFAKRLARLALTAPPEALLMVLPLICNLLRRHPACRVMVHRPQGPELDADPYDPTEKDPARSRALESCLWELQTLQQHYHPEVSRAASVINQALSVPEVSIAPLLELTAYEIFEQDLKKMMPESVPLEFIPAKGLLGRQDDLCTQFFCLS.

The next 3 membrane-spanning stretches (helical) occupy residues 296–316 (SACD…FILI), 347–367 (FFHL…LVAA), and 375–395 (LALT…CNLL).

Belongs to the CBF/MAK21 family.

It localises to the nucleus membrane. It is found in the nucleus. The protein localises to the nucleolus. The protein is Nucleolar complex protein 4 homolog (Noc4l) of Rattus norvegicus (Rat).